Here is a 61-residue protein sequence, read N- to C-terminus: Small ribosomal subunit protein uS14 (61 aa).

Basic residues predominate over residues 1 to 14 (MAKTSQKVRNHRPA). Residues 1–20 (MAKTSQKVRNHRPAKFSSRE) form a disordered region. Positions 24, 27, 40, and 43 each coordinate Zn(2+).

Belongs to the universal ribosomal protein uS14 family. Zinc-binding uS14 subfamily. In terms of assembly, part of the 30S ribosomal subunit. Contacts proteins S3 and S10. Requires Zn(2+) as cofactor.

Functionally, binds 16S rRNA, required for the assembly of 30S particles and may also be responsible for determining the conformation of the 16S rRNA at the A site. The protein is Small ribosomal subunit protein uS14 of Lactobacillus delbrueckii subsp. bulgaricus (strain ATCC 11842 / DSM 20081 / BCRC 10696 / JCM 1002 / NBRC 13953 / NCIMB 11778 / NCTC 12712 / WDCM 00102 / Lb 14).